Consider the following 4621-residue polypeptide: Dynein axonemal heavy chain 5 (4621 aa).

The segment at 1–1938 is stem; the sequence is MFRIGRRQLW…MIHITDVAFI (1938 aa). Coiled-coil stretches lie at residues 260–305 and 803–825; these read WIKQ…DQLK and LENA…DLIE. A disordered region spans residues 901–921; it reads VCHENASPSGNTSGRREGHSE. Coiled coils occupy residues 1065–1094 and 1433–1462; these read AVKN…SINL and DVNI…DWQA. AAA stretches follow at residues 1939 to 2161, 2221 to 2440, 2547 to 2800, and 2913 to 3167; these read YQNE…VLRT, TAIS…IQNL, VYPP…IWQG, and LYNE…FRRS. ATP is bound by residues 1977-1984 and 2259-2266; these read GPAGTGKT and GPSGSGKT. The segment at 3182–3479 is stalk; it reads YKFIYEEKHM…QTLLEDADRC (298 aa). Coiled coils occupy residues 3186–3299, 3423–3490, and 3729–3814; these read YEEK…QTIK, LKAN…STLI, and ILTE…EEYR. AAA stretches follow at residues 3564-3794 and 4009-4223; these read LIDA…EVTQ and ARKY…FIQN. The stretch at 4389–4417 forms a coiled coil; that stretch reads FLRQEIDRMQRVLSLVRSTLTELKLAVDG.

Belongs to the dynein heavy chain family. Interacts with DNAL1. Consists of at least two heavy chains and a number of intermediate and light chains. As to expression, strongly expressed in lung and kidney and weaker expression seen in brain, heart and testis. In the brain, expressed in ependymal cells lining the brain ventricles and the aqueduct.

The protein resides in the cytoplasm. The protein localises to the cytoskeleton. It is found in the cilium axoneme. In terms of biological role, force generating protein of respiratory cilia. Produces force towards the minus ends of microtubules. Dynein has ATPase activity; the force-producing power stroke is thought to occur on release of ADP. Required for structural and functional integrity of the cilia of ependymal cells lining the brain ventricles. The polypeptide is Dynein axonemal heavy chain 5 (Mus musculus (Mouse)).